The sequence spans 774 residues: Ent-beyerene synthase KSL4, chloroplastic (774 aa).

The transit peptide at 1-35 directs the protein to the chloroplast; it reads MLLGSTNTLRISSHGKEWEGKTLTGMPLGKVNQRV. Mg(2+) contacts are provided by aspartate 525, aspartate 529, asparagine 668, aspartate 669, threonine 672, and glutamate 676. The DDXXD motif motif lies at 525–529; that stretch reads DDFFD.

It belongs to the terpene synthase family. The cofactor is Mg(2+).

Its subcellular location is the plastid. It localises to the chloroplast. The enzyme catalyses ent-copalyl diphosphate = ent-beyerene + diphosphate. It carries out the reaction ent-copalyl diphosphate = ent-atiserene + diphosphate. The catalysed reaction is ent-copalyl diphosphate = ent-kaur-16-ene + diphosphate. It functions in the pathway secondary metabolite biosynthesis; terpenoid biosynthesis. Diterpene cyclase involved in the biosynthesis of labdane-related diterpenoids (LRDs) natural products. Catalyzes the cyclization of ent-CDP into ent-beyerene as a major and ent-kaurene and ent-atiserene as minor products. In Ricinus communis (Castor bean), this protein is Ent-beyerene synthase KSL4, chloroplastic.